A 186-amino-acid polypeptide reads, in one-letter code: Ras-related protein rapA (186 aa).

A GTP-binding site is contributed by 12–19 (GSGGVGKS). An Effector region motif is present at residues 34–42 (YDPTIEDSY). Residues 59-63 (DTAGT) and 118-121 (NKCD) contribute to the GTP site. A Cysteine methyl ester modification is found at Cys183. Residue Cys183 is the site of S-geranylgeranyl cysteine attachment. The propeptide at 184–186 (ALL) is removed in mature form.

The protein belongs to the small GTPase superfamily. Ras family. Interacts with ralGDS (only when rapA is in its GTP-bound state). Interacts with the Rap guanine nucleotide exchange factor glfB.

It localises to the cell membrane. The enzyme catalyses GTP + H2O = GDP + phosphate + H(+). In terms of biological role, g protein of the Ras family that positively regulates phagocytosis and negatively regulates macropinocytosis. May be involved in the activation of guanylyl cyclase during the response to hyperosmotic conditions. Overexpressing cells generate alterations in cell shape and contractile responses. Involved in chemotaxis via regulation of the balance of Ras and Rap signaling at the leading edge of chemotaxing cells. This is Ras-related protein rapA (rapA) from Dictyostelium discoideum (Social amoeba).